Consider the following 155-residue polypeptide: Small ribosomal subunit protein mS86 (155 aa).

Residues 1–27 constitute a mitochondrion transit peptide; sequence MHYMGLFSRAGNIFRQPRALQASNAML. In terms of domain architecture, RRM spans 36–114; the sequence is SKIFVGGLSP…RIIGVHPADS (79 aa).

This sequence belongs to the GR-RBP family. In terms of assembly, component of the mitochondrial ribosome small subunit.

Its subcellular location is the mitochondrion. Its function is as follows. Possibly has a role in RNA transcription or processing during stress. In Arabidopsis thaliana (Mouse-ear cress), this protein is Small ribosomal subunit protein mS86 (RBG6).